A 530-amino-acid chain; its full sequence is T-complex protein 1 subunit gamma (530 aa).

The protein belongs to the TCP-1 chaperonin family. As to quaternary structure, heterooligomeric complex of about 850 to 900 kDa that forms two stacked rings, 12 to 16 nm in diameter.

Its subcellular location is the cytoplasm. In terms of biological role, molecular chaperone; assists the folding of proteins upon ATP hydrolysis. Known to play a role, in vitro, in the folding of actin and tubulin. In Dictyostelium discoideum (Social amoeba), this protein is T-complex protein 1 subunit gamma (cct3).